The following is a 49-amino-acid chain: Large ribosomal subunit protein eL40 (49 aa).

This sequence belongs to the eukaryotic ribosomal protein eL40 family.

This Halorubrum lacusprofundi (strain ATCC 49239 / DSM 5036 / JCM 8891 / ACAM 34) protein is Large ribosomal subunit protein eL40.